A 549-amino-acid polypeptide reads, in one-letter code: Lipase 5 (549 aa).

The signal sequence occupies residues 1 to 15; sequence MKLALALSLIASVAA. The cysteines at positions 75 and 112 are disulfide-linked. The active-site Acyl-ester intermediate is Ser224. Cysteines 283 and 292 form a disulfide. Asn329 carries an N-linked (GlcNAc...) asparagine glycan. Residue Glu356 is the Charge relay system of the active site. Asn366 carries N-linked (GlcNAc...) asparagine glycosylation. His464 serves as the catalytic Charge relay system.

The protein belongs to the type-B carboxylesterase/lipase family.

It carries out the reaction a triacylglycerol + H2O = a diacylglycerol + a fatty acid + H(+). In Diutina rugosa (Yeast), this protein is Lipase 5 (LIP5).